Reading from the N-terminus, the 70-residue chain is Small ribosomal subunit protein bS21 (70 aa).

Belongs to the bacterial ribosomal protein bS21 family.

This Albidiferax ferrireducens (strain ATCC BAA-621 / DSM 15236 / T118) (Rhodoferax ferrireducens) protein is Small ribosomal subunit protein bS21.